Here is a 140-residue protein sequence, read N- to C-terminus: MNIALIAHDEKKEDMIQFTTAYTHVLSKHRLFATGTTGMKISNATGLQIHRFQSGPLGGDQQIGAMIANGEMDMIIFFRDPLTAQPHEPDVSALMRLCDVHQIPLVTNIAGAEIFIHGLSRGDLKWREIIKERQEKEGTP.

The MGS-like domain occupies methionine 1–proline 140. Residues histidine 8, lysine 12, threonine 34–threonine 37, and serine 54–glycine 55 each bind substrate. The active-site Proton donor/acceptor is aspartate 60. Histidine 87 contributes to the substrate binding site.

The protein belongs to the methylglyoxal synthase family.

The enzyme catalyses dihydroxyacetone phosphate = methylglyoxal + phosphate. Functionally, catalyzes the formation of methylglyoxal from dihydroxyacetone phosphate. This Oceanobacillus iheyensis (strain DSM 14371 / CIP 107618 / JCM 11309 / KCTC 3954 / HTE831) protein is Methylglyoxal synthase.